Here is a 491-residue protein sequence, read N- to C-terminus: UDP-GalNAc:beta-1,3-N-acetylgalactosaminyltransferase 2 (491 aa).

Topologically, residues 1 to 2 (MR) are cytoplasmic. A helical; Signal-anchor for type II membrane protein membrane pass occupies residues 3-23 (SAAAALSVCVLAVLLHWICWT). Over 24-491 (DRSAELLGFR…NKCGDPCGCS (468 aa)) the chain is Lumenal. Residues Asn-167 and Asn-230 are each glycosylated (N-linked (GlcNAc...) asparagine).

The protein belongs to the glycosyltransferase 31 family.

Its subcellular location is the golgi apparatus membrane. The protein resides in the endoplasmic reticulum. The enzyme catalyses 3-O-(N-acetyl-beta-D-glucosaminyl-(1-&gt;4)-alpha-D-mannosyl)-L-threonyl-[protein] + UDP-N-acetyl-alpha-D-galactosamine = 3-O-[beta-D-GalNAc-(1-&gt;3)-beta-D-GlcNAc-(1-&gt;4)-alpha-D-Man]-L-Thr-[protein] + UDP + H(+). It participates in protein modification; protein glycosylation. Beta-1,3-N-acetylgalactosaminyltransferase that synthesizes a unique carbohydrate structure, GalNAc-beta-1-3GlcNAc, on N- and O-glycans. Has no galactose nor galactosaminyl transferase activity toward any acceptor substrate. Involved in alpha-dystroglycan (dag1) glycosylation. In Danio rerio (Zebrafish), this protein is UDP-GalNAc:beta-1,3-N-acetylgalactosaminyltransferase 2 (b3galnt2).